A 259-amino-acid polypeptide reads, in one-letter code: 1-(5-phosphoribosyl)-5-[(5-phosphoribosylamino)methylideneamino] imidazole-4-carboxamide isomerase (259 aa).

D8 acts as the Proton acceptor in catalysis. Catalysis depends on D129, which acts as the Proton donor.

It belongs to the HisA/HisF family.

The protein localises to the cytoplasm. The enzyme catalyses 1-(5-phospho-beta-D-ribosyl)-5-[(5-phospho-beta-D-ribosylamino)methylideneamino]imidazole-4-carboxamide = 5-[(5-phospho-1-deoxy-D-ribulos-1-ylimino)methylamino]-1-(5-phospho-beta-D-ribosyl)imidazole-4-carboxamide. Its pathway is amino-acid biosynthesis; L-histidine biosynthesis; L-histidine from 5-phospho-alpha-D-ribose 1-diphosphate: step 4/9. This is 1-(5-phosphoribosyl)-5-[(5-phosphoribosylamino)methylideneamino] imidazole-4-carboxamide isomerase from Pelotomaculum thermopropionicum (strain DSM 13744 / JCM 10971 / SI).